Here is a 1435-residue protein sequence, read N- to C-terminus: Trafficking protein particle complex subunit 8 (1435 aa).

Residues S273, S279, and S309 each carry the phosphoserine modification. Positions 301–321 (QLEQSSDPSNSIDGPDHLRSA) are disordered. The span at 302–312 (LEQSSDPSNSI) shows a compositional bias: polar residues.

Belongs to the TRS85 family. In terms of assembly, component of the multisubunit TRAPP (transport protein particle) complex, which includes TRAPPC2, TRAPPC2L, TRAPPC3, TRAPPC3L, TRAPPC4, TRAPPC5, TRAPPC8, TRAPPC9, TRAPPC10, TRAPPC11 and TRAPPC12. Interacts with TBC1D14. Interacts (via C-terminus) with TMEM131 (via C-terminus); the interaction is direct and is involved in collagen secretion.

It is found in the golgi apparatus. The protein resides in the cis-Golgi network. Plays a role in endoplasmic reticulum to Golgi apparatus trafficking at a very early stage. Maintains together with TBC1D14 the cycling pool of ATG9 required for initiation of autophagy. Involved in collagen secretion. The chain is Trafficking protein particle complex subunit 8 (TRAPPC8) from Homo sapiens (Human).